A 144-amino-acid polypeptide reads, in one-letter code: Transcription antitermination protein NusB (144 aa).

The protein belongs to the NusB family.

Functionally, involved in transcription antitermination. Required for transcription of ribosomal RNA (rRNA) genes. Binds specifically to the boxA antiterminator sequence of the ribosomal RNA (rrn) operons. This Paraburkholderia phytofirmans (strain DSM 17436 / LMG 22146 / PsJN) (Burkholderia phytofirmans) protein is Transcription antitermination protein NusB.